Consider the following 74-residue polypeptide: uncharacterized protein (74 aa).

A helical membrane pass occupies residues 15–32 (FLHALTVTFLSDIFVWLV).

It localises to the membrane. This is an uncharacterized protein from Saccharomyces cerevisiae (strain ATCC 204508 / S288c) (Baker's yeast).